Reading from the N-terminus, the 47-residue chain is Large ribosomal subunit protein bL34 (47 aa).

This sequence belongs to the bacterial ribosomal protein bL34 family.

In Nocardia farcinica (strain IFM 10152), this protein is Large ribosomal subunit protein bL34.